The sequence spans 316 residues: Ribose-phosphate pyrophosphokinase (316 aa).

ATP is bound by residues 39 to 41 (DGE) and 98 to 99 (RQ). Residues H133 and D172 each coordinate Mg(2+). The active site involves K195. D-ribose 5-phosphate-binding positions include R197, D221, and 225–229 (DTANT).

Belongs to the ribose-phosphate pyrophosphokinase family. Class I subfamily. Homohexamer. It depends on Mg(2+) as a cofactor.

It is found in the cytoplasm. The enzyme catalyses D-ribose 5-phosphate + ATP = 5-phospho-alpha-D-ribose 1-diphosphate + AMP + H(+). The protein operates within metabolic intermediate biosynthesis; 5-phospho-alpha-D-ribose 1-diphosphate biosynthesis; 5-phospho-alpha-D-ribose 1-diphosphate from D-ribose 5-phosphate (route I): step 1/1. In terms of biological role, involved in the biosynthesis of the central metabolite phospho-alpha-D-ribosyl-1-pyrophosphate (PRPP) via the transfer of pyrophosphoryl group from ATP to 1-hydroxyl of ribose-5-phosphate (Rib-5-P). This is Ribose-phosphate pyrophosphokinase from Nitrosomonas europaea (strain ATCC 19718 / CIP 103999 / KCTC 2705 / NBRC 14298).